The sequence spans 1397 residues: ABC transporter G family member 41 (1397 aa).

An ABC transporter 1 domain is found at 138–411; sequence SLSKFVCSKK…FEGCGFKCPE (274 aa). Position 171 to 178 (171 to 178) interacts with ATP; that stretch reads GPPGCGKT. The 213-residue stretch at 489-701 folds into the ABC transmembrane type-2 1 domain; it reads EMLKACSRRE…AEIGLTANEF (213 aa). 6 helical membrane passes run 507–527, 549–570, 594–614, 625–645, 651–671, and 735–755; these read FIYL…MTVF, ALFR…RLGV, IPLS…VIGY, FIIL…IASI, ACSI…GFVI, and TAFG…TLAL. The ABC transporter 2 domain occupies 805-1050; it reads VTFQNVQYYI…VIKYFESIPG (246 aa). Residue 842–849 coordinates ATP; that stretch reads GVSGAGKT. Residues 1122–1336 enclose the ABC transmembrane type-2 2 domain; that stretch reads GQLKACLWKQ…VLEGLLSSQY (215 aa). A run of 7 helical transmembrane segments spans residues 1141 to 1161, 1173 to 1193, 1229 to 1249, 1260 to 1280, 1286 to 1306, 1314 to 1334, and 1369 to 1389; these read HNLT…LLFW, LFSI…NNCA, VPYS…MIGY, LYSI…MVAL, MALT…GFVM, WWIW…LLSS, and VVAF…AFFM.

This sequence belongs to the ABC transporter superfamily. ABCG family. PDR (TC 3.A.1.205) subfamily. In terms of tissue distribution, confined to roots.

It localises to the membrane. May be a general defense protein. In Arabidopsis thaliana (Mouse-ear cress), this protein is ABC transporter G family member 41 (ABCG41).